A 233-amino-acid chain; its full sequence is Purine nucleoside phosphorylase DeoD-type (233 aa).

H4 provides a ligand contact to a purine D-ribonucleoside. Residues G20, R24, R43, and 87-90 (RIGT) each bind phosphate. Residues 179–181 (EME) and 203–204 (SD) contribute to the a purine D-ribonucleoside site. D204 acts as the Proton donor in catalysis.

This sequence belongs to the PNP/UDP phosphorylase family. Homohexamer; trimer of homodimers.

The enzyme catalyses a purine D-ribonucleoside + phosphate = a purine nucleobase + alpha-D-ribose 1-phosphate. The catalysed reaction is a purine 2'-deoxy-D-ribonucleoside + phosphate = a purine nucleobase + 2-deoxy-alpha-D-ribose 1-phosphate. In terms of biological role, catalyzes the reversible phosphorolytic breakdown of the N-glycosidic bond in the beta-(deoxy)ribonucleoside molecules, with the formation of the corresponding free purine bases and pentose-1-phosphate. In Helicobacter acinonychis (strain Sheeba), this protein is Purine nucleoside phosphorylase DeoD-type.